Here is a 282-residue protein sequence, read N- to C-terminus: Bifunctional protein FolD (282 aa).

Residues glycine 165–serine 167, serine 190, and threonine 231 contribute to the NADP(+) site.

The protein belongs to the tetrahydrofolate dehydrogenase/cyclohydrolase family. As to quaternary structure, homodimer.

It carries out the reaction (6R)-5,10-methylene-5,6,7,8-tetrahydrofolate + NADP(+) = (6R)-5,10-methenyltetrahydrofolate + NADPH. The catalysed reaction is (6R)-5,10-methenyltetrahydrofolate + H2O = (6R)-10-formyltetrahydrofolate + H(+). It functions in the pathway one-carbon metabolism; tetrahydrofolate interconversion. Functionally, catalyzes the oxidation of 5,10-methylenetetrahydrofolate to 5,10-methenyltetrahydrofolate and then the hydrolysis of 5,10-methenyltetrahydrofolate to 10-formyltetrahydrofolate. The polypeptide is Bifunctional protein FolD (Clostridium botulinum (strain Alaska E43 / Type E3)).